The primary structure comprises 156 residues: Translationally controlled tumor protein 2 (156 aa).

In terms of domain architecture, TCTP spans 1–156 (MLVYQDILTG…LAYGLKEIKC (156 aa)).

Belongs to the TCTP family. As to expression, expressed in stems, cauline leaves, minor veins of rosette leaves, roots, lateral root primordia, vascular tissues of petioles and inflorescences, base of siliques, papillae and ovules. Not detected in root meristems, anthers or seeds. Expressed in stomata, trichomes and root cortex.

The protein localises to the nucleus. The protein resides in the cytoplasm. Its function is as follows. Regulates proliferation. Induces whole plant regeneration when expressed in heterologous systems. Involved in root growth and lateral root development, with a probable role in cell reprogramming. The long-distance transport of TCTP RNA and/or protein in plants may have an important role in regulation of growth and development. The protein is Translationally controlled tumor protein 2 of Arabidopsis thaliana (Mouse-ear cress).